The chain runs to 295 residues: Ethanolamine ammonia-lyase small subunit (295 aa).

Val-207, Glu-228, and Cys-258 together coordinate adenosylcob(III)alamin.

The protein belongs to the EutC family. As to quaternary structure, the basic unit is a heterodimer which dimerizes to form tetramers. The heterotetramers trimerize; 6 large subunits form a core ring with 6 small subunits projecting outwards. Requires adenosylcob(III)alamin as cofactor.

It is found in the bacterial microcompartment. The catalysed reaction is ethanolamine = acetaldehyde + NH4(+). The protein operates within amine and polyamine degradation; ethanolamine degradation. Functionally, catalyzes the deamination of various vicinal amino-alcohols to oxo compounds. Allows this organism to utilize ethanolamine as the sole source of nitrogen and carbon in the presence of external vitamin B12. The sequence is that of Ethanolamine ammonia-lyase small subunit from Escherichia coli O7:K1 (strain IAI39 / ExPEC).